A 156-amino-acid chain; its full sequence is Snaclec A3 (156 aa).

The signal sequence occupies residues 1–23; that stretch reads MGRSISVSFGLLVVFLSLSGTGA. Disulfide bonds link Cys-27–Cys-38, Cys-55–Cys-154, and Cys-129–Cys-146. The C-type lectin domain maps to 34–155; the sequence is HEGHCYKVFN…CGQPYRFTCE (122 aa).

This sequence belongs to the snaclec family. In terms of assembly, heterodimer; disulfide-linked. As to expression, expressed by the venom gland.

It localises to the secreted. Functionally, interferes with one step of hemostasis (modulation of platelet aggregation, or coagulation cascade, for example). In Macrovipera lebetinus (Levantine viper), this protein is Snaclec A3.